A 334-amino-acid polypeptide reads, in one-letter code: MATLKEKLIAPVAEEETRIPNNKITVVGVGQVGMACAISILGKSLTDELALVDVLEDKLKGEMMDLQHGSLFLQTPKIVADKDYSVTANSKIVVVTAGVRQQEGESRLNLVQRNVNVFKFIIPQIVKYSPDCIIIVVSNPVDILTYVTWKLSGLPKHRVIGSGCNLDSARFRYLMAEKLGIHPSSCHGWILGEHGDSSVAVWSGVNVAGVSLQELNPEMGTDNDSENWKEVHKMVVESAYEVIKLKGYTNWAIGLSVADLIESMLKNLSRIHPVSTMVKGMYGIENEVFLSLPCILNARGLTSVINQKLKDEEVAQLKKSADTLWGIQKDLKDL.

Alanine 2 is modified (N-acetylalanine). Lysine 7 carries the post-translational modification N6-acetyllysine. Residue serine 44 is modified to Phosphoserine. Residues 53 to 58 and arginine 100 each bind NAD(+); that span reads DVLEDK. At lysine 58 the chain carries N6-acetyllysine. Position 107 (arginine 107) interacts with substrate. At lysine 119 the chain carries N6-acetyllysine. Residue asparagine 139 participates in NAD(+) binding. 2 residues coordinate substrate: asparagine 139 and arginine 170. Histidine 194 serves as the catalytic Proton acceptor. Position 240 is a phosphotyrosine (tyrosine 240). Threonine 249 lines the substrate pocket. The residue at position 329 (lysine 329) is an N6-acetyllysine.

The protein belongs to the LDH/MDH superfamily. LDH family. In terms of assembly, homotetramer. Interacts with PTEN upstream reading frame protein MP31; the interaction leads to inhibition of mitochondrial lactate dehydrogenase activity, preventing conversion of lactate to pyruvate in mitochondria.

The protein resides in the cytoplasm. The protein localises to the mitochondrion inner membrane. The catalysed reaction is (S)-lactate + NAD(+) = pyruvate + NADH + H(+). The protein operates within fermentation; pyruvate fermentation to lactate; (S)-lactate from pyruvate: step 1/1. In terms of biological role, interconverts simultaneously and stereospecifically pyruvate and lactate with concomitant interconversion of NADH and NAD(+). This Bos taurus (Bovine) protein is L-lactate dehydrogenase B chain (LDHB).